We begin with the raw amino-acid sequence, 699 residues long: Osmotic avoidance abnormal protein 3 (699 aa).

The 324-residue stretch at Ser-4–Ile-327 folds into the Kinesin motor domain. Position 87 to 94 (Gly-87 to Thr-94) interacts with ATP. A coiled-coil region spans residues Asp-339–Glu-523.

The protein belongs to the TRAFAC class myosin-kinesin ATPase superfamily. Kinesin family. Kinesin II subfamily. Expressed in an exclusive set of 26 chemosensory neurons whose dendritic endings are exposed to the external environment; six IL2 neurons of the inner labial sensilla, 8 pairs of amphid neurons in the head, and 2 pairs of phasmid neurons in the tail.

Its subcellular location is the cytoplasm. The protein localises to the cytoskeleton. It is found in the cell projection. It localises to the cilium. The protein resides in the cilium axoneme. Its subcellular location is the cilium basal body. Its function is as follows. Kinesin motor protein which is required for the anterograde intraflagellar transport (IFT) along the middle segment of the sensory neuron cilia together with the kinesin II motor complex (composed of klp-11, klp-20 and kap-1) and on its own, is required for IFT along the distal segment. In addition, regulates the length of cilia. May have a role during neurogenesis and axonal transport. The sequence is that of Osmotic avoidance abnormal protein 3 from Caenorhabditis elegans.